The following is a 90-amino-acid chain: DNA-binding protein HU (90 aa).

It belongs to the bacterial histone-like protein family. As to quaternary structure, homodimer.

Histone-like DNA-binding protein which is capable of wrapping DNA to stabilize it, and thus to prevent its denaturation under extreme environmental conditions. In Pasteurella multocida (strain Pm70), this protein is DNA-binding protein HU (hup).